The chain runs to 213 residues: Large ribosomal subunit protein uL1 (213 aa).

It belongs to the universal ribosomal protein uL1 family. Part of the 50S ribosomal subunit.

In terms of biological role, binds directly to 23S rRNA. Probably involved in E site tRNA release. Its function is as follows. Protein L1 is also a translational repressor protein, it controls the translation of its operon by binding to its mRNA. This chain is Large ribosomal subunit protein uL1, found in Methanococcus maripaludis (strain DSM 14266 / JCM 13030 / NBRC 101832 / S2 / LL).